Here is a 150-residue protein sequence, read N- to C-terminus: Small ribosomal subunit protein uS11x (150 aa).

Belongs to the universal ribosomal protein uS11 family.

It is found in the cytoplasm. This Arabidopsis thaliana (Mouse-ear cress) protein is Small ribosomal subunit protein uS11x (RPS14C).